Reading from the N-terminus, the 460-residue chain is Cysteine proteinase 7 (460 aa).

Positions 1–17 are cleaved as a signal peptide; sequence MKVLSALCVLLVSVATA. Residues 18 to 111 constitute a propeptide, activation peptide; the sequence is KQQLSEVEYR…TESDKIFDAS (94 aa). Intrachain disulfides connect cysteine 131–cysteine 176 and cysteine 167–cysteine 210. Cysteine 134 is an active-site residue. N-linked (GlcNAc...) asparagine glycosylation is found at asparagine 226 and asparagine 252. An intrachain disulfide couples cysteine 268 to cysteine 445. Histidine 275 is a catalytic residue. The segment at 285 to 409 is disordered; sequence GSGSSGSHGG…GSSSGSNSNG (125 aa). Over residues 294–359 the composition is skewed to low complexity; the sequence is GSQSQSAGSD…QSGSQSGNSG (66 aa). The segment covering 367-385 has biased composition (gly residues); the sequence is AGSGSGSGSGSGSGSGSGS. Low complexity predominate over residues 386–409; sequence VSGSASGSASGSASGSSSGSNSNG. Asparagine 423 is an active-site residue.

It belongs to the peptidase C1 family. In terms of processing, glycosylated; contains GlcNAc-alpha-1-P-Ser residues. Also N-glycosylated.

Its subcellular location is the lysosome. The sequence is that of Cysteine proteinase 7 (cprG) from Dictyostelium discoideum (Social amoeba).